A 447-amino-acid chain; its full sequence is Glucose-6-phosphate isomerase (447 aa).

The active-site Proton donor is Glu289. Residues His310 and Lys424 contribute to the active site.

It belongs to the GPI family.

It is found in the cytoplasm. It catalyses the reaction alpha-D-glucose 6-phosphate = beta-D-fructose 6-phosphate. It functions in the pathway carbohydrate biosynthesis; gluconeogenesis. It participates in carbohydrate degradation; glycolysis; D-glyceraldehyde 3-phosphate and glycerone phosphate from D-glucose: step 2/4. In terms of biological role, catalyzes the reversible isomerization of glucose-6-phosphate to fructose-6-phosphate. In Parabacteroides distasonis (strain ATCC 8503 / DSM 20701 / CIP 104284 / JCM 5825 / NCTC 11152), this protein is Glucose-6-phosphate isomerase.